The sequence spans 463 residues: Pentatricopeptide repeat-containing protein At2g17670 (463 aa).

Residues 1–63 (MGKVPSSFRS…PSLRNPFKSP (63 aa)) form a disordered region. 9 PPR repeats span residues 121–157 (GRST…GLEP), 158–192 (DQVT…HSPP), 193–223 (DTYT…MRDD), 229–263 (DLVS…GFKP), 264–298 (DCFL…GVEP), 299–333 (DQIT…GYEP), 334–368 (DTAT…GCAP), 369–403 (NDCT…GVKL), and 404–438 (ESNG…KSLS).

The protein belongs to the PPR family. P subfamily.

This Arabidopsis thaliana (Mouse-ear cress) protein is Pentatricopeptide repeat-containing protein At2g17670.